Reading from the N-terminus, the 178-residue chain is Endoribonuclease YbeY (178 aa).

Residues H118, H122, and H128 each contribute to the Zn(2+) site. The segment at 158-178 (ADRQSEKDRRLLDKSRYFDEP) is disordered.

It belongs to the endoribonuclease YbeY family. The cofactor is Zn(2+).

Its subcellular location is the cytoplasm. Single strand-specific metallo-endoribonuclease involved in late-stage 70S ribosome quality control and in maturation of the 3' terminus of the 16S rRNA. The sequence is that of Endoribonuclease YbeY from Mycolicibacterium smegmatis (strain ATCC 700084 / mc(2)155) (Mycobacterium smegmatis).